Consider the following 201-residue polypeptide: Large ribosomal subunit protein uL4 (201 aa).

The interval 44–66 (KAQKTRAEVRGGGKKPWRQKGTG) is disordered. The span at 55–66 (GGKKPWRQKGTG) shows a compositional bias: basic residues.

The protein belongs to the universal ribosomal protein uL4 family. Part of the 50S ribosomal subunit.

Functionally, one of the primary rRNA binding proteins, this protein initially binds near the 5'-end of the 23S rRNA. It is important during the early stages of 50S assembly. It makes multiple contacts with different domains of the 23S rRNA in the assembled 50S subunit and ribosome. Its function is as follows. Forms part of the polypeptide exit tunnel. The chain is Large ribosomal subunit protein uL4 from Alteromonas mediterranea (strain DSM 17117 / CIP 110805 / LMG 28347 / Deep ecotype).